A 117-amino-acid polypeptide reads, in one-letter code: Large ribosomal subunit protein bL20c (117 aa).

The protein belongs to the bacterial ribosomal protein bL20 family.

The protein resides in the plastid. Its subcellular location is the chloroplast. Binds directly to 23S ribosomal RNA and is necessary for the in vitro assembly process of the 50S ribosomal subunit. It is not involved in the protein synthesizing functions of that subunit. The polypeptide is Large ribosomal subunit protein bL20c (Populus alba (White poplar)).